Here is a 336-residue protein sequence, read N- to C-terminus: Holliday junction branch migration complex subunit RuvB (336 aa).

Residues 4 to 184 (ADRLISAGTT…FGIVQRLEFY (181 aa)) form a large ATPase domain (RuvB-L) region. Residues isoleucine 23, arginine 24, glycine 65, lysine 68, threonine 69, threonine 70, 131–133 (EDY), arginine 174, tyrosine 184, and arginine 221 contribute to the ATP site. Residue threonine 69 participates in Mg(2+) binding. The tract at residues 185–255 (QVPDLQYIVS…IAAQALDMLN (71 aa)) is small ATPAse domain (RuvB-S). The interval 258–336 (AEGFDYMDRK…HFGITPPEMP (79 aa)) is head domain (RuvB-H). DNA is bound by residues arginine 294, arginine 313, and arginine 318.

The protein belongs to the RuvB family. In terms of assembly, homohexamer. Forms an RuvA(8)-RuvB(12)-Holliday junction (HJ) complex. HJ DNA is sandwiched between 2 RuvA tetramers; dsDNA enters through RuvA and exits via RuvB. An RuvB hexamer assembles on each DNA strand where it exits the tetramer. Each RuvB hexamer is contacted by two RuvA subunits (via domain III) on 2 adjacent RuvB subunits; this complex drives branch migration. In the full resolvosome a probable DNA-RuvA(4)-RuvB(12)-RuvC(2) complex forms which resolves the HJ.

The protein localises to the cytoplasm. The enzyme catalyses ATP + H2O = ADP + phosphate + H(+). Functionally, the RuvA-RuvB-RuvC complex processes Holliday junction (HJ) DNA during genetic recombination and DNA repair, while the RuvA-RuvB complex plays an important role in the rescue of blocked DNA replication forks via replication fork reversal (RFR). RuvA specifically binds to HJ cruciform DNA, conferring on it an open structure. The RuvB hexamer acts as an ATP-dependent pump, pulling dsDNA into and through the RuvAB complex. RuvB forms 2 homohexamers on either side of HJ DNA bound by 1 or 2 RuvA tetramers; 4 subunits per hexamer contact DNA at a time. Coordinated motions by a converter formed by DNA-disengaged RuvB subunits stimulates ATP hydrolysis and nucleotide exchange. Immobilization of the converter enables RuvB to convert the ATP-contained energy into a lever motion, pulling 2 nucleotides of DNA out of the RuvA tetramer per ATP hydrolyzed, thus driving DNA branch migration. The RuvB motors rotate together with the DNA substrate, which together with the progressing nucleotide cycle form the mechanistic basis for DNA recombination by continuous HJ branch migration. Branch migration allows RuvC to scan DNA until it finds its consensus sequence, where it cleaves and resolves cruciform DNA. This is Holliday junction branch migration complex subunit RuvB from Escherichia coli O17:K52:H18 (strain UMN026 / ExPEC).